We begin with the raw amino-acid sequence, 126 residues long: Large ribosomal subunit protein bL12 (126 aa).

This sequence belongs to the bacterial ribosomal protein bL12 family. As to quaternary structure, homodimer. Part of the ribosomal stalk of the 50S ribosomal subunit. Forms a multimeric L10(L12)X complex, where L10 forms an elongated spine to which 2 to 4 L12 dimers bind in a sequential fashion. Binds GTP-bound translation factors.

Forms part of the ribosomal stalk which helps the ribosome interact with GTP-bound translation factors. Is thus essential for accurate translation. This chain is Large ribosomal subunit protein bL12, found in Acidovorax sp. (strain JS42).